The chain runs to 320 residues: Cytochrome f (320 aa).

A signal peptide spans 1-35 (MQNRNTFSWVKEQMTRFISVSIMIYVITRTSISNA). Residues Tyr36, Cys56, Cys59, and His60 each contribute to the heme site. The helical transmembrane segment at 286-306 (VQGLLFFLASVILAQIFLVLK) threads the bilayer.

The protein belongs to the cytochrome f family. In terms of assembly, the 4 large subunits of the cytochrome b6-f complex are cytochrome b6, subunit IV (17 kDa polypeptide, petD), cytochrome f and the Rieske protein, while the 4 small subunits are PetG, PetL, PetM and PetN. The complex functions as a dimer. It depends on heme as a cofactor.

The protein localises to the plastid. It is found in the chloroplast thylakoid membrane. Its function is as follows. Component of the cytochrome b6-f complex, which mediates electron transfer between photosystem II (PSII) and photosystem I (PSI), cyclic electron flow around PSI, and state transitions. The polypeptide is Cytochrome f (Liriodendron tulipifera (Tuliptree)).